A 448-amino-acid polypeptide reads, in one-letter code: Exoglucanase GH7B (448 aa).

The signal sequence occupies residues 1–17 (MSLAVVFLLGFLAVSHG). At Gln-18 the chain carries Pyrrolidone carboxylic acid. Cystine bridges form between Cys-62/Cys-83 and Cys-73/Cys-79. Residues Tyr-97, 119-120 (DI), and Lys-197 contribute to the substrate site. 6 disulfides stabilise this stretch: Cys-154–Cys-415, Cys-188–Cys-226, Cys-192–Cys-225, Cys-246–Cys-271, Cys-254–Cys-259, and Cys-276–Cys-350. Catalysis depends on Glu-228, which acts as the Nucleophile. Substrate contacts are provided by residues 230 to 233 (DIWE) and His-244. Catalysis depends on Glu-233, which acts as the Proton donor/acceptor. Positions 266 and 274 each coordinate substrate. 2 residues coordinate substrate: Trp-396 and Arg-412.

It belongs to the glycosyl hydrolase 7 (cellulase C) family. In terms of assembly, monomer. Highly expressed in the hepatopancreas (at protein level). Little or no expression detected in the hindgut or the rest of the body (at protein level).

The protein localises to the secreted. It catalyses the reaction Hydrolysis of (1-&gt;4)-beta-D-glucosidic linkages in cellulose and cellotetraose, releasing cellobiose from the non-reducing ends of the chains.. Exocellobiohydrolase (CBH) that catalyzes the hydrolysis of 1,4-beta-D-glucosidic bonds in cellulose to release the disaccharide cellobiose. The degradation of cellulose involves an interplay between different cellulolytic enzymes. Hydrolysis starts with endoglucanases (EGs), which cut internal beta-1,4-glucosidic bonds in cellulose to reduce the polymerization degree of the substrate and create new chain ends for exocellobiohydrolases (CBHs). The CBHs release the disaccharide cellobiose from the non-reducing end of the cellulose polymer chain. Finally, beta-1,4-glucosidases hydrolyze the cellobiose and other short cello-oligosaccharides into glucose units. The sequence is that of Exoglucanase GH7B from Limnoria quadripunctata (Gribble).